We begin with the raw amino-acid sequence, 197 residues long: Small ribosomal subunit protein uS2 (197 aa).

The protein belongs to the universal ribosomal protein uS2 family.

The chain is Small ribosomal subunit protein uS2 (rps2) from Archaeoglobus fulgidus (strain ATCC 49558 / DSM 4304 / JCM 9628 / NBRC 100126 / VC-16).